The sequence spans 643 residues: Clathrin interactor 1 (643 aa).

The region spanning 16-149 (NVVMNYSEIE…QDDDRLREER (134 aa)) is the ENTH domain. Arg-29 provides a ligand contact to a 1,2-diacyl-sn-glycero-3-phospho-(1D-myo-inositol-4,5-bisphosphate). Positions 52–54 (FMY) are interaction with VTI1B. Residue Arg-67 participates in a 1,2-diacyl-sn-glycero-3-phospho-(1D-myo-inositol-4,5-bisphosphate) binding. Interaction with VTI1B regions lie at residues 94–96 (SER) and 142–153 (DDRLREERKKAK). Phosphoserine is present on residues Ser-163, Ser-166, Ser-173, Ser-205, Ser-210, Ser-227, Ser-245, and Ser-299. A disordered region spans residues 219 to 331 (FRRKDREDSP…SSGDLVDLFD (113 aa)). Basic and acidic residues predominate over residues 222–239 (KDREDSPERCSDSDEEKK). Residues 300–310 (PDQNASTHTPQ) show a composition bias toward polar residues. At Thr-308 the chain carries Phosphothreonine. Low complexity predominate over residues 311-323 (SSLKTSVPSSKSS). Phosphoserine is present on residues Ser-312 and Ser-642.

It belongs to the epsin family. As to quaternary structure, binds clathrin heavy chain and AP-2. Interacts with VTI1B. Interacts with GGA2 (via GAE domain). Interacts with AP1G1 (via GAE domain). Interacts with AP1G2 (via GAE domain).

The protein resides in the cytoplasm. It is found in the perinuclear region. It localises to the membrane. The protein localises to the cytoplasmic vesicle. Its subcellular location is the clathrin-coated vesicle. Binds to membranes enriched in phosphatidylinositol 4,5-bisphosphate (PtdIns(4,5)P2). May have a role in transport via clathrin-coated vesicles from the trans-Golgi network to endosomes. Stimulates clathrin assembly. This chain is Clathrin interactor 1 (CLINT1), found in Bos taurus (Bovine).